The sequence spans 267 residues: tRNA pseudouridine synthase A (267 aa).

The active-site Nucleophile is Asp-51. Residue Tyr-109 participates in substrate binding.

This sequence belongs to the tRNA pseudouridine synthase TruA family. In terms of assembly, homodimer.

The catalysed reaction is uridine(38/39/40) in tRNA = pseudouridine(38/39/40) in tRNA. Its function is as follows. Formation of pseudouridine at positions 38, 39 and 40 in the anticodon stem and loop of transfer RNAs. The sequence is that of tRNA pseudouridine synthase A from Staphylococcus saprophyticus subsp. saprophyticus (strain ATCC 15305 / DSM 20229 / NCIMB 8711 / NCTC 7292 / S-41).